A 208-amino-acid polypeptide reads, in one-letter code: Large ribosomal subunit protein bL25 (208 aa).

Residues 1–21 are disordered; that stretch reads MSNEFSLNAEKRDVQGKGASR.

It belongs to the bacterial ribosomal protein bL25 family. CTC subfamily. As to quaternary structure, part of the 50S ribosomal subunit; part of the 5S rRNA/L5/L18/L25 subcomplex. Contacts the 5S rRNA. Binds to the 5S rRNA independently of L5 and L18.

This is one of the proteins that binds to the 5S RNA in the ribosome where it forms part of the central protuberance. In Hahella chejuensis (strain KCTC 2396), this protein is Large ribosomal subunit protein bL25.